A 431-amino-acid polypeptide reads, in one-letter code: MARGQPRRSEEQWTALQNRTECKTKIKLTRCGKITLGILTAVLAAVLIGLIAYFAACGKDSFYYHVSFKVNNIDYDSKFAKPYSQEYMDLNKRIVSLMNETFHESKLRKQYVKAHTVQVSKAKGKVVIHAVLKFKACYRNNVEKYWESVETTLYQKLKGQTGLLIDSSSFKFSDIAMPIAEDLLNTCCGRRTIIHRGHKVAGGQDAEEGEWPWQASLQQNSVHRCGATLISNYWLITAAHCFIRAANPKDWKVSFGFLLSKPQAPRAVKNIIIHENYSYPAHDNDIAVVRLSSPVLYESNIRRACLPEATQKFPPNSDVVVTGWGTLKSDGDSPNILQKGKVKIIDNKTCNSGKAYGGMITPGMMCAGFLKGRVDACQGDSGGPLVSEDSKGIWFLAGIVSWGDECALPNKPGVYTRVTYYRDWITSKTGL.

Residues 1 to 33 (MARGQPRRSEEQWTALQNRTECKTKIKLTRCGK) lie on the Cytoplasmic side of the membrane. The chain crosses the membrane as a helical; Signal-anchor for type II membrane protein span at residues 34–54 (ITLGILTAVLAAVLIGLIAYF). The Extracellular segment spans residues 55 to 431 (AACGKDSFYY…RDWITSKTGL (377 aa)). The SEA domain maps to 60-177 (DSFYYHVSFK…SSFKFSDIAM (118 aa)). An N-linked (GlcNAc...) asparagine glycan is attached at N99. Residues 200-430 (VAGGQDAEEG…YRDWITSKTG (231 aa)) form the Peptidase S1 domain. Cysteines 225 and 241 form a disulfide. H240 functions as the Charge relay system in the catalytic mechanism. N-linked (GlcNAc...) asparagine glycosylation is present at N276. Residue D285 is the Charge relay system of the active site. A glycan (N-linked (GlcNAc...) asparagine) is linked at N347. 2 disulfides stabilise this stretch: C350–C366 and C377–C406. The active-site Charge relay system is S381.

The protein belongs to the peptidase S1 family. Proteolytically cleaved via an autocatalytic mechanism. As to expression, expressed specifically in Purkinje neurons of the cerebellum (at protein level). Also detected in spinal cord.

It is found in the cell membrane. The protein resides in the cell projection. The protein localises to the dendrite. It localises to the perikaryon. Functionally, serine protease which has a preference for Arg or Lys in position P1 and uncharged residues in positions P2 and P3. Shows specificity towards FGF2 in vitro. The protein is Transmembrane protease serine 11C of Mus musculus (Mouse).